The primary structure comprises 473 residues: Photosystem II CP43 reaction center protein (473 aa).

Residues 1-14 constitute a propeptide that is removed on maturation; it reads MKTLYSLRRFYHVE. An N-acetylthreonine modification is found at T15. Residue T15 is modified to Phosphothreonine. 5 consecutive transmembrane segments (helical) span residues 69–93, 134–155, 178–200, 255–275, and 291–312; these read LFEVAHFVPEKPMYEQGLILLPHLA, LLGPETLEESFPFFGYVWKDRN, KAFYFGGIYDTWAPGGGDVRKIT, KPFAWARRALVWSGEAYLSYS, and WFNNTAYPSEFYGPTGPEASQA. E367 contacts [CaMn4O5] cluster. Residues 447–471 traverse the membrane as a helical segment; the sequence is RARAAAAGFEKGIDRDFEPVLSMTP.

It belongs to the PsbB/PsbC family. PsbC subfamily. As to quaternary structure, PSII is composed of 1 copy each of membrane proteins PsbA, PsbB, PsbC, PsbD, PsbE, PsbF, PsbH, PsbI, PsbJ, PsbK, PsbL, PsbM, PsbT, PsbX, PsbY, PsbZ, Psb30/Ycf12, at least 3 peripheral proteins of the oxygen-evolving complex and a large number of cofactors. It forms dimeric complexes. It depends on Binds multiple chlorophylls and provides some of the ligands for the Ca-4Mn-5O cluster of the oxygen-evolving complex. It may also provide a ligand for a Cl- that is required for oxygen evolution. PSII binds additional chlorophylls, carotenoids and specific lipids. as a cofactor.

The protein resides in the plastid. It is found in the chloroplast thylakoid membrane. Its function is as follows. One of the components of the core complex of photosystem II (PSII). It binds chlorophyll and helps catalyze the primary light-induced photochemical processes of PSII. PSII is a light-driven water:plastoquinone oxidoreductase, using light energy to abstract electrons from H(2)O, generating O(2) and a proton gradient subsequently used for ATP formation. This is Photosystem II CP43 reaction center protein from Pisum sativum (Garden pea).